A 306-amino-acid chain; its full sequence is Non-specific ribonucleoside hydrolase RihC (306 aa).

The active site involves His235.

The protein belongs to the IUNH family. RihC subfamily.

Its function is as follows. Hydrolyzes both purine and pyrimidine ribonucleosides with a broad-substrate specificity. This Salmonella paratyphi C (strain RKS4594) protein is Non-specific ribonucleoside hydrolase RihC.